A 137-amino-acid polypeptide reads, in one-letter code: MGDDGVGIKIGRELKRQGYKVEELGTDIFSLMRVYNGENKVIIVDAVLGEIPGKVVYFKGEDIFKKLRAEIRSAHFMGAVEGLKLLLEVDERLKNAELHFVGVTIKEPKLGLELSEEVKRAIPRAMELILSIIREGE.

This is Protein FrxA (frxA) from Pyrococcus furiosus (strain ATCC 43587 / DSM 3638 / JCM 8422 / Vc1).